The sequence spans 121 residues: Small ribosomal subunit protein uS13 (121 aa).

The disordered stretch occupies residues 89 to 121 (MRHRRGLPVRGQNTKNNARTRKGKKVSIAGKKK). Over residues 106 to 121 (ARTRKGKKVSIAGKKK) the composition is skewed to basic residues.

The protein belongs to the universal ribosomal protein uS13 family. In terms of assembly, part of the 30S ribosomal subunit. Forms a loose heterodimer with protein S19. Forms two bridges to the 50S subunit in the 70S ribosome.

Located at the top of the head of the 30S subunit, it contacts several helices of the 16S rRNA. In the 70S ribosome it contacts the 23S rRNA (bridge B1a) and protein L5 of the 50S subunit (bridge B1b), connecting the 2 subunits; these bridges are implicated in subunit movement. Contacts the tRNAs in the A and P-sites. This chain is Small ribosomal subunit protein uS13, found in Latilactobacillus sakei subsp. sakei (strain 23K) (Lactobacillus sakei subsp. sakei).